A 228-amino-acid polypeptide reads, in one-letter code: L-ribulose-5-phosphate 4-epimerase UlaF (228 aa).

Substrate is bound by residues Gly26 to Asn27, Ser43 to Gly44, and Ser72 to Ser73. Asp74, His93, and His95 together coordinate Zn(2+). The Proton donor/acceptor role is filled by Asp118. His167 provides a ligand contact to Zn(2+). The active-site Proton donor/acceptor is the Tyr225.

The protein belongs to the aldolase class II family. AraD/FucA subfamily. Requires Zn(2+) as cofactor.

It carries out the reaction L-ribulose 5-phosphate = D-xylulose 5-phosphate. It functions in the pathway cofactor degradation; L-ascorbate degradation; D-xylulose 5-phosphate from L-ascorbate: step 4/4. Its function is as follows. Catalyzes the isomerization of L-ribulose 5-phosphate to D-xylulose 5-phosphate. Is involved in the anaerobic L-ascorbate utilization. The protein is L-ribulose-5-phosphate 4-epimerase UlaF of Escherichia coli O7:K1 (strain IAI39 / ExPEC).